The sequence spans 292 residues: Carbapenem-hydrolyzing beta-lactamase transcriptional activator (292 aa).

One can recognise an HTH lysR-type domain in the interval 5–62; the sequence is IPLNALRAFEASARYLNFTKAGLELHVSQAAVSQHVRTLEAILGVNLFKRLPRGLQLT. Positions 22–41 form a DNA-binding region, H-T-H motif; the sequence is FTKAGLELHVSQAAVSQHVR.

Belongs to the LysR transcriptional regulatory family.

In terms of biological role, this protein is a positive regulator of gene expression of carbapenem-hydrolyzing beta-lactamase (smeA). Seems to also be a repressor of its own transcription. The polypeptide is Carbapenem-hydrolyzing beta-lactamase transcriptional activator (smeR) (Serratia marcescens).